We begin with the raw amino-acid sequence, 408 residues long: G2/mitotic-specific cyclin-B (408 aa).

This sequence belongs to the cyclin family. Cyclin AB subfamily. In terms of assembly, interacts with the CDC2 protein kinase to form a serine/threonine kinase holoenzyme complex also known as maturation promoting factor (MPF). The cyclin subunit imparts substrate specificity to the complex.

In terms of biological role, essential for the control of the cell cycle at the G2/M (mitosis) transition. In Patella vulgata (Common limpet), this protein is G2/mitotic-specific cyclin-B.